Here is a 411-residue protein sequence, read N- to C-terminus: LL-diaminopimelate aminotransferase (411 aa).

Y15 and G42 together coordinate substrate. Residues Y72, 108-109, Y132, N187, Y218, and 246-248 each bind pyridoxal 5'-phosphate; these read SK and SFS. K109, Y132, and N187 together coordinate substrate. An N6-(pyridoxal phosphate)lysine modification is found at K249. Pyridoxal 5'-phosphate is bound by residues R257 and N292. The substrate site is built by N292 and R388.

It belongs to the class-I pyridoxal-phosphate-dependent aminotransferase family. LL-diaminopimelate aminotransferase subfamily. Homodimer. Pyridoxal 5'-phosphate serves as cofactor.

The catalysed reaction is (2S,6S)-2,6-diaminopimelate + 2-oxoglutarate = (S)-2,3,4,5-tetrahydrodipicolinate + L-glutamate + H2O + H(+). It participates in amino-acid biosynthesis; L-lysine biosynthesis via DAP pathway; LL-2,6-diaminopimelate from (S)-tetrahydrodipicolinate (aminotransferase route): step 1/1. Involved in the synthesis of meso-diaminopimelate (m-DAP or DL-DAP), required for both lysine and peptidoglycan biosynthesis. Catalyzes the direct conversion of tetrahydrodipicolinate to LL-diaminopimelate. This chain is LL-diaminopimelate aminotransferase, found in Trichodesmium erythraeum (strain IMS101).